Consider the following 486-residue polypeptide: Glutamyl-tRNA(Gln) amidotransferase subunit A (486 aa).

Residues Lys79 and Ser154 each act as charge relay system in the active site. Ser178 serves as the catalytic Acyl-ester intermediate.

The protein belongs to the amidase family. GatA subfamily. Heterotrimer of A, B and C subunits.

The enzyme catalyses L-glutamyl-tRNA(Gln) + L-glutamine + ATP + H2O = L-glutaminyl-tRNA(Gln) + L-glutamate + ADP + phosphate + H(+). Its function is as follows. Allows the formation of correctly charged Gln-tRNA(Gln) through the transamidation of misacylated Glu-tRNA(Gln) in organisms which lack glutaminyl-tRNA synthetase. The reaction takes place in the presence of glutamine and ATP through an activated gamma-phospho-Glu-tRNA(Gln). This chain is Glutamyl-tRNA(Gln) amidotransferase subunit A, found in Dehalococcoides mccartyi (strain CBDB1).